We begin with the raw amino-acid sequence, 255 residues long: Small ribosomal subunit protein eS1A (255 aa).

Over residues 1–18 the composition is skewed to basic residues; it reads MAVGKNKRLSKGKKGQKK. Positions 1 to 20 are disordered; it reads MAVGKNKRLSKGKKGQKKRV. Ala-2 is modified (N-acetylalanine; partial). Residue Thr-245 is modified to Phosphothreonine. Lys-248 participates in a covalent cross-link: Glycyl lysine isopeptide (Lys-Gly) (interchain with G-Cter in ubiquitin). Position 254 is a phosphothreonine (Thr-254).

This sequence belongs to the eukaryotic ribosomal protein eS1 family. Component of the small ribosomal subunit. Mature ribosomes consist of a small (40S) and a large (60S) subunit. The 40S subunit contains about 33 different proteins and 1 molecule of RNA (18S). The 60S subunit contains about 49 different proteins and 3 molecules of RNA (25S, 5.8S and 5S).

It is found in the cytoplasm. The protein is Small ribosomal subunit protein eS1A of Saccharomyces cerevisiae (strain RM11-1a) (Baker's yeast).